Consider the following 517-residue polypeptide: Xylosidase/arabinosidase (517 aa).

The active-site Proton acceptor is D15. E185 serves as the catalytic Proton donor.

Belongs to the glycosyl hydrolase 43 family.

It carries out the reaction Hydrolysis of (1-&gt;4)-beta-D-xylans, to remove successive D-xylose residues from the non-reducing termini.. The catalysed reaction is Hydrolysis of terminal non-reducing alpha-L-arabinofuranoside residues in alpha-L-arabinosides.. Its function is as follows. Has a 1.6-fold higher activity as an arabinosidase than as a beta-xylosidase when tested on the substrates nitrophenyl-beta-D-xylopyranoside and P-nitrophenyl-alpha-L-arabinofuranoside. The chain is Xylosidase/arabinosidase (xylB) from Butyrivibrio fibrisolvens.